We begin with the raw amino-acid sequence, 1573 residues long: Soluble scavenger receptor cysteine-rich domain-containing protein SSC5D (1573 aa).

Residues M1–A16 form the signal peptide. The SRCR 1 domain occupies L20–A120. Disulfide bonds link C45–C109, C58–C119, and C89–C99. The interval E153–A192 is disordered. N-linked (GlcNAc...) asparagine glycosylation is present at N168. A compositionally biased stretch (basic residues) spans S170 to K181. 2 SRCR domains span residues L198–T298 and L304–D404. 6 disulfides stabilise this stretch: C223–C287, C236–C297, C267–C277, C329–C393, C342–C403, and C373–C383. Residues N376 and N420 are each glycosylated (N-linked (GlcNAc...) asparagine). Residues P412–P465 are disordered. Residues P431–P440 are compositionally biased toward polar residues. The SRCR 4 domain occupies L467 to T568. 3 cysteine pairs are disulfide-bonded: C492/C557, C505/C567, and C537/C547. Residues E614–L769 form a disordered region. The segment covering K626–K637 has biased composition (basic residues). The segment covering A654–E671 has biased composition (polar residues). A compositionally biased stretch (basic and acidic residues) spans A672 to T685. 2 stretches are compositionally biased toward polar residues: residues E687–P702 and K711–Q735. The SRCR 5 domain occupies V772–T872. Disulfide bonds link C797-C861, C810-C871, and C841-C851. Disordered stretches follow at residues K895 to A1475 and M1554 to V1573. Over residues R924–Y934 the composition is skewed to basic and acidic residues. Pro residues-rich tracts occupy residues P1004 to P1020 and T1083 to T1093. Over residues D1101–S1140 the composition is skewed to polar residues. The span at D1144–A1160 shows a compositional bias: pro residues. Low complexity-rich tracts occupy residues P1161–F1175 and P1185–P1277. A compositionally biased stretch (pro residues) spans T1278–P1328. Polar residues-rich tracts occupy residues V1335 to L1354 and P1364 to I1380. Residues P1381–S1401 show a composition bias toward low complexity. Residues G1464 to A1475 are compositionally biased toward pro residues.

As to quaternary structure, interacts with LGALS1 and laminin. Highly expressed in monocytes/macrophages and T-lymphocytes. Highly expressed in placenta and spleen, and also detected at lower levels in colon, and more weakly in lung, heart and kidney.

The protein localises to the secreted. It localises to the cytoplasm. In terms of biological role, binds to extracellular matrix proteins. Binds to pathogen-associated molecular patterns (PAMPs) present on the cell walls of Gram-positive and Gram-negative bacteria and fungi, behaving as a pattern recognition receptor (PRR). Induces bacterial and fungal aggregation and subsequent inhibition of PAMP-induced cytokine release. Does not possess intrinsic bactericidal activity. May play a role in the innate defense and homeostasis of certain epithelial surfaces. The chain is Soluble scavenger receptor cysteine-rich domain-containing protein SSC5D (SSC5D) from Homo sapiens (Human).